The chain runs to 850 residues: Receptor-like serine/threonine-protein kinase SD1-8 (850 aa).

Residues 1 to 26 (MRGLPNFYHSYTFFFFFLLILFPAYS) form the signal peptide. The Extracellular segment spans residues 27-441 (ISANTLSASE…LEDKRNRSAK (415 aa)). Residues 31 to 153 (TLSASESLTI…KNSAPDGVLW (123 aa)) form the Bulb-type lectin domain. Residues Asn43, Asn118, and Asn242 are each glycosylated (N-linked (GlcNAc...) asparagine). Residues 292–328 (PKDQCDEYKECGVYGYCDSNTSPVCNCIKGFKPRNPQ) form the EGF-like domain. Intrachain disulfides connect Cys296/Cys308, Cys302/Cys316, Cys378/Cys403, and Cys382/Cys388. The region spanning 347–428 (CGGGDGFVRL…GGQDLYVRLA (82 aa)) is the PAN domain. N-linked (GlcNAc...) asparagine glycans are attached at residues Asn387 and Asn437. The chain crosses the membrane as a helical span at residues 442–462 (IIGSSIGVSVLLLLSFIIFFL). Topologically, residues 463 to 850 (WKRKQKRSIL…QITVSVLDAR (388 aa)) are cytoplasmic. The Protein kinase domain occupies 526–807 (FSNANKLGQG…LMLGSESTTI (282 aa)). Residues 532 to 540 (LGQGGFGIV) and Lys554 contribute to the ATP site. A caM-binding region spans residues 615–632 (SRNSKLNWQMRFDIINGI). Asp651 (proton acceptor) is an active-site residue.

Belongs to the protein kinase superfamily. Ser/Thr protein kinase family. Interacts with PUB9, PUB13, PUB14 and PUB38. As to expression, expressed in the root-hypocotyl transition zone, at the base of lateral roots, axillary buds and pedicels.

It is found in the cell membrane. The catalysed reaction is L-seryl-[protein] + ATP = O-phospho-L-seryl-[protein] + ADP + H(+). It carries out the reaction L-threonyl-[protein] + ATP = O-phospho-L-threonyl-[protein] + ADP + H(+). Its function is as follows. Involved in the regulation of cellular expansion and differentiation. This Arabidopsis thaliana (Mouse-ear cress) protein is Receptor-like serine/threonine-protein kinase SD1-8 (SD18).